Reading from the N-terminus, the 536-residue chain is MGSNKSKPKDASQRRRSLEPAENVHGAGGGAFPASQTPSKPASADGHRGPSAAFAPAAAEPKLFGGFNSSDTVTSPQRAGPLAGGVTTFVALYDYESRTETDLSFKKGERLQIVNNTEGDWWLAHSLSTGQTGYIPSNYVAPSDSIQAEEWYFGKITRRESERLLLNAENPRGTFLVRESETTKGAYCLSVSDFDNAKGLNVKHYKIRKLDSGGFYITSRTQFNSLQQLVAYYSKHADGLCHRLTTVCPTSKPQTQGLAKDAWEIPRESLRLEVKLGQGCFGEVWMGTWNGTTRVAIKTLKPGTMSPEAFLQEAQVMKKLRHEKLVQLYAVVSEEPIYIVTEYMSKGSLLDFLKGETGKYLRLPQLVDMAAQIASGMAYVERMNYVHRDLRAANILVGENLVCKVADFGLARLIEDNEYTARQGAKFPIKWTAPEAALYGRFTIKSDVWSFGILLTELTTKGRVPYPGMVNREVLDQVERGYRMPCPPECPESLHDLMCQCWRKEPEERPTFEYLQAFLEDYFTSTEPQYQPGENL.

Positions 1 to 53 are disordered; that stretch reads MGSNKSKPKDASQRRRSLEPAENVHGAGGGAFPASQTPSKPASADGHRGPSAA. G2 is lipidated: N-myristoyl glycine. A compositionally biased stretch (basic and acidic residues) spans 7 to 19; that stretch reads KPKDASQRRRSLE. Residue S17 is modified to Phosphoserine. S75 is modified (phosphoserine; by CDK5). The SH3 domain occupies 84-145; the sequence is GGVTTFVALY…PSNYVAPSDS (62 aa). In terms of domain architecture, SH2 spans 151-248; the sequence is WYFGKITRRE…GLCHRLTTVC (98 aa). Y187 is subject to Phosphotyrosine. The region spanning 270–523 is the Protein kinase domain; sequence LRLEVKLGQG…YLQAFLEDYF (254 aa). Residues 276–284 and K298 contribute to the ATP site; that span reads LGQGCFGEV. D389 (proton acceptor) is an active-site residue. Y419 is subject to Phosphotyrosine; by autocatalysis. Y419 is subject to Phosphotyrosine; by FAK2. Phosphotyrosine; by CSK is present on Y530.

The protein belongs to the protein kinase superfamily. Tyr protein kinase family. SRC subfamily. Part of a complex comprised of PTPRA, BCAR1, BCAR3 (via SH2 domain) and SRC; the formation of the complex is dependent on integrin mediated-tyrosine phosphorylation of PTPRA. Interacts with DDEF1/ASAP1; via the SH3 domain. Interacts with CCPG1. Identified in a complex containing FGFR4, NCAM1, CDH2, PLCG1, FRS2, SRC, SHC1, GAP43 and CTTN. Interacts with ERBB2, STAT1 and PNN. Interacts with DDR1, DDR2 and DAB2. Interacts with CDCP1, TGFB1I1 and TOM1L2. Interacts with the cytoplasmic domain of MUC1, phosphorylates it and increases binding of MUC1 with beta-catenin. Interacts with RALGPS1; via the SH3 domain. Interacts with CAV2 (tyrosine phosphorylated form). Interacts (via the SH3 domain and the protein kinase domain) with ARRB1; the interaction is independent of the phosphorylation state of SRC C-terminus. Interacts with ARRB1 and ARRB2. Interacts with SRCIN1. Interacts with NDFIP2 and more weakly with NDFIP1. Interacts with PIK3CA and/or PIK3C2B, PTK2/FAK1 and ESR1 (dimethylated on arginine). Interacts with FASLG. Interacts (via SH2 domain) with the 'Tyr-402' phosphorylated form of PTK2B/PYK2. Interacts (via SH2 domain) with FLT3 (tyrosine phosphorylated). Interacts with PDGFRA (tyrosine phosphorylated). Interacts with CSF1R. Interacts (via SH2 and SH3 domain) with TNK2. Interacts (via protein kinase domain) with the tyrosine phosphorylated form of RUNX3 (via runt domain). Interacts with TRAF3 (via RING-type zinc finger domain). Interacts with RIGI, MAVS and TBK1. Interacts (via SH2 domain) with RACK1; the interaction is enhanced by tyrosine phosphorylation of RACK1 and inhibits SRC activity. Interacts with EPHB1; activates the MAPK/ERK cascade to regulate cell migration. Interacts with FCAMR. Interacts (via SH2 domain) with the 'Tyr-9' phosphorylated form of PDPK1. Interacts with AMOTL2; this interaction regulates the translocation of phosphorylated SRC to peripheral cell-matrix adhesion sites. Interacts with TRAP1. Interacts with CBLC; the interaction is enhanced when SRC is phosphorylated at Tyr-419. Interacts with ARHGEF5. Interacts (via cytoplasmic domain) with CEACAM1 (via SH2 domain); this interaction is regulated by trans-homophilic cell adhesion. Interacts with MPP2. Interacts with PRR7. Interacts (via kinase domain and to a lesser extent the SH2 domain) directly with PDLIM4; this interaction results in PTPN13-mediated dephosphorylation of this protein leading to its inactivation. Interacts with P85 (PIK3R1 or PIK3R2). Interacts with HNRNPA2B1. Interacts with IL6ST/gp130. Interacts (via SH3 domain) with PELP1 in the presence of 17-beta-estradiol. Interacts with AMBRA1. As to quaternary structure, (Microbial infection) Interacts with HEV ORF3 protein; via the SH3 domain. In terms of assembly, (Microbial infection) Interacts (via SH2 domain) with HCV non-structural protein 5A (via N-terminus). In terms of processing, myristoylated at Gly-2, and this is essential for targeting to membranes. Post-translationally, dephosphorylated at Tyr-530 by PTPRJ. Phosphorylated on Tyr-530 by c-Src kinase (CSK). The phosphorylated form is termed pp60c-src. Dephosphorylated by PTPRJ at Tyr-419. Normally maintained in an inactive conformation with the SH2 domain engaged with Tyr-530, the SH3 domain engaged with the SH2-kinase linker, and Tyr-419 dephosphorylated. Dephosphorylation of Tyr-530 as a result of protein tyrosine phosphatase (PTP) action disrupts the intramolecular interaction between the SH2 domain and Tyr-530, Tyr-419 can then become autophosphorylated, resulting in SRC activation. Phosphorylation of Tyr-530 by CSK allows this interaction to reform, resulting in SRC inactivation. CDK5-mediated phosphorylation at Ser-75 targets SRC to ubiquitin-dependent degradation and thus leads to cytoskeletal reorganization. Phosphorylated by PTK2/FAK1; this enhances kinase activity. Phosphorylated by PTK2B/PYK2; this enhances kinase activity. Upon activation of IL6ST by IL6, Tyr-419 is phosphorylated and Tyr-530 dephosphorylated. Displays reduced levels of autophosphorylation at Tyr-419 compared to isoforms 2 and 3. In terms of processing, displays enhanced levels of autophosphorylation at Tyr-419 compared to isoform 1. Post-translationally, displays enhanced levels of autophosphorylation at Tyr-419 compared to isoform 1. Shows reduced phosphorylation at Tyr-527 compared to isoforms 1 and 2. S-nitrosylation is important for activation of its kinase activity. In terms of processing, ubiquitinated in response to CDK5-mediated phosphorylation. Ubiquitination mediated by CBLC requires SRC autophosphorylation at Tyr-419 and may lead to lysosomal degradation. Expressed ubiquitously. Expressed in the skin (at protein level). Platelets, neurons and osteoclasts express 5-fold to 200-fold higher levels than most other tissues. In terms of tissue distribution, expressed in spleen and liver. As to expression, expressed in brain.

It localises to the cell membrane. Its subcellular location is the mitochondrion inner membrane. The protein localises to the nucleus. It is found in the cytoplasm. The protein resides in the cytoskeleton. It localises to the perinuclear region. Its subcellular location is the cell junction. The protein localises to the focal adhesion. The enzyme catalyses L-tyrosyl-[protein] + ATP = O-phospho-L-tyrosyl-[protein] + ADP + H(+). Its activity is regulated as follows. Phosphorylation by CSK at Tyr-530 inhibits kinase activity. Inhibitory phosphorylation at Tyr-530 is enhanced by heme. Further phosphorylation by CDK1 partially reactivates CSK-inactivated SRC and facilitates complete reactivation by protein tyrosine phosphatase PTPRC. Integrin engagement stimulates kinase activity. Phosphorylation by PTK2/FAK1 enhances kinase activity. Butein and pseudosubstrate-based peptide inhibitors like CIYKYYF act as inhibitors. Phosphorylation at Tyr-419 increases kinase activity. In terms of biological role, non-receptor protein tyrosine kinase which is activated following engagement of many different classes of cellular receptors including immune response receptors, integrins and other adhesion receptors, receptor protein tyrosine kinases, G protein-coupled receptors as well as cytokine receptors. Participates in signaling pathways that control a diverse spectrum of biological activities including gene transcription, immune response, cell adhesion, cell cycle progression, apoptosis, migration, and transformation. Due to functional redundancy between members of the SRC kinase family, identification of the specific role of each SRC kinase is very difficult. SRC appears to be one of the primary kinases activated following engagement of receptors and plays a role in the activation of other protein tyrosine kinase (PTK) families. Receptor clustering or dimerization leads to recruitment of SRC to the receptor complexes where it phosphorylates the tyrosine residues within the receptor cytoplasmic domains. Plays an important role in the regulation of cytoskeletal organization through phosphorylation of specific substrates such as AFAP1. Phosphorylation of AFAP1 allows the SRC SH2 domain to bind AFAP1 and to localize to actin filaments. Cytoskeletal reorganization is also controlled through the phosphorylation of cortactin (CTTN). When cells adhere via focal adhesions to the extracellular matrix, signals are transmitted by integrins into the cell resulting in tyrosine phosphorylation of a number of focal adhesion proteins, including PTK2/FAK1 and paxillin (PXN). In addition to phosphorylating focal adhesion proteins, SRC is also active at the sites of cell-cell contact adherens junctions and phosphorylates substrates such as beta-catenin (CTNNB1), delta-catenin (CTNND1), and plakoglobin (JUP). Another type of cell-cell junction, the gap junction, is also a target for SRC, which phosphorylates connexin-43 (GJA1). SRC is implicated in regulation of pre-mRNA-processing and phosphorylates RNA-binding proteins such as KHDRBS1. Phosphorylates PKP3 at 'Tyr-195' in response to reactive oxygen species, which may cause the release of PKP3 from desmosome cell junctions into the cytoplasm. Also plays a role in PDGF-mediated tyrosine phosphorylation of both STAT1 and STAT3, leading to increased DNA binding activity of these transcription factors. Involved in the RAS pathway through phosphorylation of RASA1 and RASGRF1. Plays a role in EGF-mediated calcium-activated chloride channel activation. Required for epidermal growth factor receptor (EGFR) internalization through phosphorylation of clathrin heavy chain (CLTC and CLTCL1) at 'Tyr-1477'. Involved in beta-arrestin (ARRB1 and ARRB2) desensitization through phosphorylation and activation of GRK2, leading to beta-arrestin phosphorylation and internalization. Has a critical role in the stimulation of the CDK20/MAPK3 mitogen-activated protein kinase cascade by epidermal growth factor. Might be involved not only in mediating the transduction of mitogenic signals at the level of the plasma membrane but also in controlling progression through the cell cycle via interaction with regulatory proteins in the nucleus. Plays an important role in osteoclastic bone resorption in conjunction with PTK2B/PYK2. Both the formation of a SRC-PTK2B/PYK2 complex and SRC kinase activity are necessary for this function. Recruited to activated integrins by PTK2B/PYK2, thereby phosphorylating CBL, which in turn induces the activation and recruitment of phosphatidylinositol 3-kinase to the cell membrane in a signaling pathway that is critical for osteoclast function. Promotes energy production in osteoclasts by activating mitochondrial cytochrome C oxidase. Phosphorylates DDR2 on tyrosine residues, thereby promoting its subsequent autophosphorylation. Phosphorylates RUNX3 and COX2 on tyrosine residues, TNK2 on 'Tyr-284' and CBL on 'Tyr-731'. Enhances RIGI-elicited antiviral signaling. Phosphorylates PDPK1 at 'Tyr-9', 'Tyr-373' and 'Tyr-376'. Phosphorylates BCAR1 at 'Tyr-128'. Phosphorylates CBLC at multiple tyrosine residues, phosphorylation at 'Tyr-341' activates CBLC E3 activity. Phosphorylates synaptic vesicle protein synaptophysin (SYP). Involved in anchorage-independent cell growth. Required for podosome formation. Mediates IL6 signaling by activating YAP1-NOTCH pathway to induce inflammation-induced epithelial regeneration. Phosphorylates OTUB1, promoting deubiquitination of RPTOR. Phosphorylates caspase CASP8 at 'Tyr-380' which negatively regulates CASP8 processing and activation, down-regulating CASP8 proapoptotic function. Non-receptor protein tyrosine kinase which phosphorylates synaptophysin with high affinity. Functionally, non-receptor protein tyrosine kinase which shows higher basal kinase activity than isoform 1, possibly due to weakened intramolecular interactions which enhance autophosphorylation of Tyr-419 and subsequent activation. The SH3 domain shows reduced affinity with the linker sequence between the SH2 and kinase domains which may account for the increased basal activity. Displays altered substrate specificity compared to isoform 1, showing weak affinity for synaptophysin and for peptide substrates containing class I or class II SH3 domain-binding motifs. Plays a role in L1CAM-mediated neurite elongation, possibly by acting downstream of L1CAM to drive cytoskeletal rearrangements involved in neurite outgrowth. Its function is as follows. Non-receptor protein tyrosine kinase which shows higher basal kinase activity than isoform 1, possibly due to weakened intramolecular interactions which enhance autophosphorylation of Tyr-419 and subsequent activation. The SH3 domain shows reduced affinity with the linker sequence between the SH2 and kinase domains which may account for the increased basal activity. Displays altered substrate specificity compared to isoform 1, showing weak affinity for synaptophysin and for peptide substrates containing class I or class II SH3 domain-binding motifs. Plays a role in neurite elongation. The protein is Proto-oncogene tyrosine-protein kinase Src of Homo sapiens (Human).